Consider the following 1072-residue polypeptide: MREAAERRQQLELEHEQALAFLNAKQQEIQLLQQAQVEAKKEHEGAVQLLESKVRELEEKCRVQSEQFNLLSRDLEKFRQHTGSIDLLGSSSVALLDVPLAPGKPFPQYMNGLATSIHKGHEGPTGHYSVIGDYIPLSGDKLESPCVKPSFLLRSSSPRCRFESEMDNDRNSNNSKQSSSGKVHLCVARYSYNPFDGPNENPEAELPLTAGKYLYVYGDMDEDGFYEGELLDGQRGLVPSNFVDFIQDNESRLAGTLGSEQDQNFLNHSGISLERDSILHLHSPTQVDSGITDNGGGTLDVNIDDIGEDTVPYPRKITLIKQLAKSVIVGWEPPAVPPGWGTVSSYNVLVDKETRMSLALGRRTKALIEKLNTAACTYRISVQCVTSRGNSDELQCTLLVGKDVVVAPSQLRVDNITQISAQLSWLPTNSNYSHIIFLNEEELDIVKAARYKYQFFNLRPNMAYKVKVLAQPHQMPWQLPLEQREKKEACVEFSTLPAGPPAPPQDVTVHAGATAASVQVSWKPPALTPTGLSNGANVTGYGVYAKGQRVAEVIAPTADGTAVELIRLRSLEAKAVSVRTLSVQGESMDSALAAIPPDLLVPPAPHPRTAPPPKPLASDMDTKDQHLGPHVKVDESWEQSRSPGPAHGHMLEPPDMHSAGPGRRSPSPSRILPQPQGAPVSTTVAKAMAREAAQRVAESNRLEKRSLFLEQSSAGQYTNSDEEDGYASPEVKRRGTSVDDFLKGSELGKQPHCCHGDEYHTESSRGSDLSDIMEEDEEELYSEMQLEDGGRRRPSGTSHNALKILGNSTLMGRADRMEHVSRRYSHSGGGSHRHRPAMAPSIDEYTGRDHLSPDFYDESETDPGAEELPARIFVALFDYDPLTMSPNPDAAEEELPFKEGQIIKVYGDKDADGFYRGETCARLGLIPCNMVSEIHADDEEMMDQLLRQGFLPLNTPVEKIERSRRSGRGHSVPTRRMVALYDYDPRESSPNVDVEAELPFCTGDIITVFGEIDEDGFYYGELNGQKGLVPSNFLEEVPDDVEVHLSDAPPHYSHDPPMRSKAKRKKSVHFTP.

Positions 181 to 248 (GKVHLCVARY…PSNFVDFIQD (68 aa)) constitute an SH3 1 domain. 3 consecutive Fibronectin type-III domains span residues 311-404 (VPYP…GKDV), 407-489 (APSQ…KKEA), and 503-604 (PPQD…VPPA). 2 disordered regions span residues 597–681 (PDLL…APVS) and 713–800 (SAGQ…TSHN). Residues 599-615 (LLVPPAPHPRTAPPPKP) show a composition bias toward pro residues. Over residues 620-635 (MDTKDQHLGPHVKVDE) the composition is skewed to basic and acidic residues. Over residues 660 to 670 (GPGRRSPSPSR) the composition is skewed to low complexity. Phosphoserine occurs at positions 720 and 728. 2 stretches are compositionally biased toward basic and acidic residues: residues 730 to 743 (EVKRRGTSVDDFLK) and 754 to 765 (CHGDEYHTESSR). Acidic residues predominate over residues 771 to 781 (DIMEEDEEELY). Phosphoserine occurs at positions 852 and 859. T861 carries the post-translational modification Phosphothreonine. SH3 domains are found at residues 868 to 936 (LPAR…EIHA) and 972 to 1039 (VPTR…EVPD). Residues 1044–1072 (HLSDAPPHYSHDPPMRSKAKRKKSVHFTP) are disordered. Basic residues predominate over residues 1060–1072 (SKAKRKKSVHFTP).

It belongs to the RIMBP family. As to quaternary structure, interacts with RIMS1, RIMS2, CACNA1D and CACNA1B, and potentially with other Ca(2+) channel alpha-1 isoforms.

The protein localises to the cell membrane. It localises to the synapse. Its function is as follows. Plays a role in the synaptic transmission as bifunctional linker that interacts simultaneously with RIMS1, RIMS2, CACNA1D and CACNA1B. In Mus musculus (Mouse), this protein is RIMS-binding protein 2 (Rimbp2).